The sequence spans 272 residues: Putative pyruvate, phosphate dikinase regulatory protein (272 aa).

153 to 160 (GVSRTSKT) contacts ADP.

Belongs to the pyruvate, phosphate/water dikinase regulatory protein family. PDRP subfamily.

It catalyses the reaction N(tele)-phospho-L-histidyl/L-threonyl-[pyruvate, phosphate dikinase] + ADP = N(tele)-phospho-L-histidyl/O-phospho-L-threonyl-[pyruvate, phosphate dikinase] + AMP + H(+). It carries out the reaction N(tele)-phospho-L-histidyl/O-phospho-L-threonyl-[pyruvate, phosphate dikinase] + phosphate + H(+) = N(tele)-phospho-L-histidyl/L-threonyl-[pyruvate, phosphate dikinase] + diphosphate. Bifunctional serine/threonine kinase and phosphorylase involved in the regulation of the pyruvate, phosphate dikinase (PPDK) by catalyzing its phosphorylation/dephosphorylation. The protein is Putative pyruvate, phosphate dikinase regulatory protein of Streptococcus sanguinis (strain SK36).